Reading from the N-terminus, the 270-residue chain is F-actin-capping protein subunit beta (270 aa).

Belongs to the F-actin-capping protein beta subunit family. As to quaternary structure, component of the F-actin capping complex, composed of a heterodimer of an alpha and a beta subunit.

The protein resides in the cytoplasm. The protein localises to the cytoskeleton. Functionally, F-actin-capping proteins bind in a Ca(2+)-independent manner to the fast growing ends of actin filaments (barbed end) thereby blocking the exchange of subunits at these ends. Unlike other capping proteins (such as gelsolin and severin), these proteins do not sever actin filaments. This is F-actin-capping protein subunit beta (cap-2) from Caenorhabditis elegans.